The following is a 258-amino-acid chain: MPKTLTEKLNAIKAAGKGIFVPYIMAGDHEKGLDGLAETIHFLEDLGVSAIEVGIPFSDPVADGPVIEEAGLRSLAHGTSTQALVETLKTIETEIPLVIMTYFNPLFQYGVENFVKDLADTAVKGLIIPDLPHEHANFVEPFLANTDIALIPLVSLTTGIERQKELIEGAEGFIYAVAINGVTGKSGNYRADLDKHLAQLHQVADIPVLTGFGVSSQADLERFNAVSDGVIVGSKIVKALHQGEPIQDFIKQAVAYQK.

Residues Glu-52 and Asp-63 each act as proton acceptor in the active site.

The protein belongs to the TrpA family. As to quaternary structure, tetramer of two alpha and two beta chains.

The enzyme catalyses (1S,2R)-1-C-(indol-3-yl)glycerol 3-phosphate + L-serine = D-glyceraldehyde 3-phosphate + L-tryptophan + H2O. The protein operates within amino-acid biosynthesis; L-tryptophan biosynthesis; L-tryptophan from chorismate: step 5/5. Its function is as follows. The alpha subunit is responsible for the aldol cleavage of indoleglycerol phosphate to indole and glyceraldehyde 3-phosphate. This Streptococcus pneumoniae (strain 70585) protein is Tryptophan synthase alpha chain.